Reading from the N-terminus, the 476-residue chain is MDFEAVIGLEVHAELSTNTKIYCGCTTEFGGQPNTHVCPICLGLPGSLPQLNKRVVEYGIKAGLALNCSINKVCRMDRKNYFYPDCPKNYQITQDEVPICRDGYIEIELENGEKKRIGIERIHMEEDAGKLLHTNAGTLVDYNRAGVPLIEIVSRPDIRTPEEATKYLEKLKSILSSIEVSDCKMEQGSLRCDGNISVMPKGSEKFGVRSEIKNMNSFKALEKALSYEYDRHVEAVTKGETLEQETRRWDEANSVTVLMRSKEKANDYRYFPEGDLVTLNISDEWIEEVRKTIPELPHEKAERFVNEFGIPKYDAMVLTLTMDMAKFFEETAVKSEDAKAASNWLMGDISRLMNEKTIEVKNLKFNPEQLAQLIKLINAGTISNNIGKKVLDDMFKSGKNPKDIVEEKGLVQNNDEGAILEVVKKIIENNPQSIEDFKNGKKRALGFLVGLVMKETKGKANPQIVNKVVSEEANKM.

Belongs to the GatB/GatE family. GatB subfamily. Heterotrimer of A, B and C subunits.

The enzyme catalyses L-glutamyl-tRNA(Gln) + L-glutamine + ATP + H2O = L-glutaminyl-tRNA(Gln) + L-glutamate + ADP + phosphate + H(+). It carries out the reaction L-aspartyl-tRNA(Asn) + L-glutamine + ATP + H2O = L-asparaginyl-tRNA(Asn) + L-glutamate + ADP + phosphate + 2 H(+). Functionally, allows the formation of correctly charged Asn-tRNA(Asn) or Gln-tRNA(Gln) through the transamidation of misacylated Asp-tRNA(Asn) or Glu-tRNA(Gln) in organisms which lack either or both of asparaginyl-tRNA or glutaminyl-tRNA synthetases. The reaction takes place in the presence of glutamine and ATP through an activated phospho-Asp-tRNA(Asn) or phospho-Glu-tRNA(Gln). This Clostridium botulinum (strain Loch Maree / Type A3) protein is Aspartyl/glutamyl-tRNA(Asn/Gln) amidotransferase subunit B.